A 488-amino-acid polypeptide reads, in one-letter code: Glutamyl-tRNA(Gln) amidotransferase subunit A (488 aa).

Catalysis depends on charge relay system residues Lys-77 and Ser-152. Ser-176 (acyl-ester intermediate) is an active-site residue.

It belongs to the amidase family. GatA subfamily. As to quaternary structure, heterotrimer of A, B and C subunits.

It catalyses the reaction L-glutamyl-tRNA(Gln) + L-glutamine + ATP + H2O = L-glutaminyl-tRNA(Gln) + L-glutamate + ADP + phosphate + H(+). Allows the formation of correctly charged Gln-tRNA(Gln) through the transamidation of misacylated Glu-tRNA(Gln) in organisms which lack glutaminyl-tRNA synthetase. The reaction takes place in the presence of glutamine and ATP through an activated gamma-phospho-Glu-tRNA(Gln). The protein is Glutamyl-tRNA(Gln) amidotransferase subunit A of Streptococcus pyogenes serotype M1.